Reading from the N-terminus, the 437-residue chain is MQGGRVVLGLLCCLVAGVGSYTPWDISWAARGDPSAWSWGAEAHSRAVAGSHPVAVQCQEAQLVVTVHRDLFGTGRLINAADLTLGPAACKHSSLNAAHNTVTFAAGLHECGSVVQVTPDTLIYRTLINYDPSPASNPVIIRTNPAVIPIECHYPRRENVSSNAIRPTWSPFNSALSAEERLVFSLRLMSDDWSTERPFTGFQLGDILNIQAEVSTENHVPLRLFVDSCVAALSPDGDSSPHYAIIDFNGCLVDGRVDDTSSAFITPRPREDVLRFRIDVFRFAGDNRNLIYITCHLKVTPADQGPDPQNKACSFNKARNTWVPVEGSRDVCNCCETGNCEPPALSRRLNPMERWQSRRFRRDAGKEVAADVVIGPVLLSADPGAVGQQEEGGDGAAVMVPSVGTGLVCVAVAVALAAVGVAVGIARKGCTRTSAAV.

The first 20 residues, 1–20, serve as a signal peptide directing secretion; that stretch reads MQGGRVVLGLLCCLVAGVGS. Topologically, residues 21–405 are extracellular; that stretch reads YTPWDISWAA…AAVMVPSVGT (385 aa). One can recognise a ZP domain in the interval 57–320; that stretch reads QCQEAQLVVT…KACSFNKARN (264 aa). 2 cysteine pairs are disulfide-bonded: Cys-58–Cys-152 and Cys-90–Cys-111. Asn-159 is a glycosylation site (N-linked (GlcNAc...) asparagine). Thr-168 carries O-linked (GalNAc...) threonine glycosylation. Cystine bridges form between Cys-229–Cys-295, Cys-251–Cys-335, Cys-313–Cys-332, and Cys-334–Cys-340. Positions 361–437 are cleaved as a propeptide — removed in mature form; sequence RRDAGKEVAA…KGCTRTSAAV (77 aa). Positions 368–380 are extracellular hydrophobic patch; it reads VAADVVIGPVLLS. Residues 406-426 traverse the membrane as a helical segment; that stretch reads GLVCVAVAVALAAVGVAVGIA. The Cytoplasmic segment spans residues 427–437; sequence RKGCTRTSAAV.

Belongs to the ZP domain family. ZPC subfamily. Homodimer. Forms higher oligomers, once its C-terminus has been proteolytically removed. Forms heterooligomers with other zona pellucida glycoproteins. Proteolytically cleaved before the transmembrane segment to yield the secreted ectodomain incorporated in the zona pellucida. In terms of processing, N-glycosylated. Post-translationally, O-glycosylated. O-glycosylation at Thr-168 is important for efficient interaction with the sperm head. As to expression, detected in the ovarian perivitteline layer. Detected in granulosa cells in ovarian follicle (at protein level). Detected in granulosa cells in ovarian follicle.

It localises to the secreted. Its subcellular location is the extracellular space. The protein localises to the extracellular matrix. The protein resides in the cell membrane. Functionally, component of the zona pellucida, which mediates species-specific sperm binding. Directly binds to sperm. Important for egg fertilization. In Gallus gallus (Chicken), this protein is Zona pellucida sperm-binding protein 3 (ZP3).